We begin with the raw amino-acid sequence, 518 residues long: MIPDVSQALAWLEKHPQALKGIQRGLERETLRVNADGTLATTGHPEALGSALTHKWITTDFAEALLEFITPVDGDIEHMLTFMRDLHRYTARNMGDERMWPLSMPCYIAEGQDIELAQYGTSNTGRFKTLYREGLKNRYGALMQTISGVHYNFSLPMAFWQAKCGDISGADAKEKISAGYFRVIRNYYRFGWVIPYLFGASPAICSSFLQGKPTSLPFEKTECGMYYLPYATSLRLSDLGYTNKSQSNLGITFNDLYEYVAGLKQAIKTPSEEYAKIGIDKDGKRLQINSNVLQIENELYAPIRPKRVTRSGESPSDALLRGGIEYIEVRSLDINPFSPIGVDEQQVRFLDLFMVWCALADAPEMSSSELACTRVNWNRVILEGRKPGLTLGIGCETAQFPLPQVGKDLFRDLKRVAQTLDSINGGEAYQKVCDELVACFDNPDLTFSARILRSMIDTGIGGTGKAFAEAYRNLLREEPLEILREEDFVAEREASERRQQEMEAADTEPFAVWLEKHA.

The protein belongs to the glutamate--cysteine ligase type 1 family. Type 1 subfamily.

The enzyme catalyses L-cysteine + L-glutamate + ATP = gamma-L-glutamyl-L-cysteine + ADP + phosphate + H(+). The protein operates within sulfur metabolism; glutathione biosynthesis; glutathione from L-cysteine and L-glutamate: step 1/2. In Escherichia coli O157:H7, this protein is Glutamate--cysteine ligase.